Reading from the N-terminus, the 777-residue chain is Hepatocyte growth factor-regulated tyrosine kinase substrate (777 aa).

Positions 15 to 143 constitute a VHS domain; that stretch reads ATSQLLLETD…IMKVEGHVFP (129 aa). Residues 160 to 220 form an FYVE-type zinc finger; it reads WVDAEECHRC…VCEPCYEQLN (61 aa). Cysteine 166, cysteine 169, cysteine 182, cysteine 185, cysteine 190, and cysteine 193 together coordinate Zn(2+). Lysine 207 bears the N6-acetyllysine mark. Zn(2+) contacts are provided by cysteine 212 and cysteine 215. Tyrosine 216 is modified (phosphotyrosine). The tract at residues 223 to 319 is disordered; sequence AEGKATSTTE…SPVNSSAPLA (97 aa). The tract at residues 225–543 is interaction with SNX1; the sequence is GKATSTTELP…QRLQEQEKER (319 aa). The 20-residue stretch at 258–277 folds into the UIM domain; sequence QEEEELQLALALSQSEAEEK. Residues 290–311 are compositionally biased toward low complexity; the sequence is PKAEPMPSASSAPPASSLYSSP. Phosphotyrosine is present on residues tyrosine 308, tyrosine 329, and tyrosine 334. The disordered stretch occupies residues 338–407; sequence KQEEARKSPT…NGESEESHEQ (70 aa). The tract at residues 445 to 543 is interaction with SNAP25 and TRAK2; that stretch reads SINGMHPQLL…QRLQEQEKER (99 aa). An interaction with STAM region spans residues 454-572; sequence LELLNQLDER…FPLPYAQLQA (119 aa). Positions 480–777 are interaction with NF2; sequence ARGALSALRE…GSEAQLISFD (298 aa). Residue lysine 551 is modified to N6-succinyllysine. A disordered region spans residues 718-777; sequence LPSQDASLPPQQPYIAGQQPMYQQMAPSGGPPQQQPPVAQQPQAQGPPAQGSEAQLISFD. Low complexity predominate over residues 753–768; it reads PPVAQQPQAQGPPAQG.

In terms of assembly, component of the ESCRT-0 complex composed of STAM or STAM2 and HGS. Part of a complex at least composed of HSG, STAM2 (or probably STAM) and EPS15. Interacts with STAM. Interacts with STAM2. Interacts with EPS15; the interaction is direct, calcium-dependent and inhibited by SNAP25. Identified in a complex with STAM and LITAF. Found in a complex with STAM and E3 ligase ITCH and DTX3L. Interacts with E3 ligase DTX3L; the interaction brings together STAM and HSG, promotes their recruitment to early endosomes and decreases STAM and HGS ubiquitination by ITCH. Interacts with NF2; the interaction is direct. Interacts with ubiquitin; the interaction is direct. Interacts with VPS37C. Interacts with SMAD1, SMAD2 and SMAD3. Interacts with TSG101; the interaction mediates the association with the ESCRT-I complex. Interacts with SNAP25; the interaction is direct and decreases with addition of increasing concentrations of free calcium. Interacts with SNX1; the interaction is direct. Component of a 550 kDa membrane complex at least composed of HGS and SNX1 but excluding EGFR. Interacts with TRAK1. Interacts with TRAK2. Component of the CART complex, at least composed of ACTN4, HGS/HRS, MYO5B and TRIM3. Interacts (via UIM domain) with UBQLN1 (via ubiquitin-like domain). Interacts with ARRDC3. Identified in a complex containing at least ARRDC4, AVPR2 and HGS. Interacts with LAPTM4B; promotes HGS ubiquitination. Post-translationally, phosphorylated on Tyr-334. A minor site of phosphorylation on Tyr-329 is detected. Phosphorylation occurs in response to EGF, IL-2, GM-CSF and HGF. In terms of processing, ubiquitinated. Ubiquitinated by ITCH. As to expression, ubiquitous expression in adult and fetal tissues with higher expression in testis and peripheral blood leukocytes.

It is found in the cytoplasm. The protein localises to the early endosome membrane. Its subcellular location is the endosome. It localises to the multivesicular body membrane. Functionally, involved in intracellular signal transduction mediated by cytokines and growth factors. When associated with STAM, it suppresses DNA signaling upon stimulation by IL-2 and GM-CSF. Could be a direct effector of PI3-kinase in vesicular pathway via early endosomes and may regulate trafficking to early and late endosomes by recruiting clathrin. May concentrate ubiquitinated receptors within clathrin-coated regions. Involved in down-regulation of receptor tyrosine kinase via multivesicular body (MVBs) when complexed with STAM (ESCRT-0 complex). The ESCRT-0 complex binds ubiquitin and acts as a sorting machinery that recognizes ubiquitinated receptors and transfers them to further sequential lysosomal sorting/trafficking processes. May contribute to the efficient recruitment of SMADs to the activin receptor complex. Involved in receptor recycling via its association with the CART complex, a multiprotein complex required for efficient transferrin receptor recycling but not for EGFR degradation. The polypeptide is Hepatocyte growth factor-regulated tyrosine kinase substrate (HGS) (Homo sapiens (Human)).